A 421-amino-acid polypeptide reads, in one-letter code: U-box domain-containing protein 25 (421 aa).

The 76-residue stretch at 13-88 (QIPYHFRCPI…QEWCVANRSN (76 aa)) folds into the U-box domain.

It carries out the reaction S-ubiquitinyl-[E2 ubiquitin-conjugating enzyme]-L-cysteine + [acceptor protein]-L-lysine = [E2 ubiquitin-conjugating enzyme]-L-cysteine + N(6)-ubiquitinyl-[acceptor protein]-L-lysine.. It participates in protein modification; protein ubiquitination. Functionally, functions as an E3 ubiquitin ligase. This chain is U-box domain-containing protein 25 (PUB25), found in Arabidopsis thaliana (Mouse-ear cress).